The following is a 455-amino-acid chain: Chromosomal replication initiator protein DnaA 2 (455 aa).

A domain I, interacts with DnaA modulators region spans residues 1–95; the sequence is MLTCNDCSTW…KRSSPLVTPS (95 aa). The interval 96–112 is domain II; sequence IAKPATEVSEENKDFQL. The domain III, AAA+ region stretch occupies residues 113–328; that stretch reads KLNGAYRFDN…GAINKLTAYC (216 aa). Positions 157, 159, 160, and 161 each coordinate ATP. The interval 329 to 455 is domain IV, binds dsDNA; the sequence is LLFNKPLTET…IAIDSPQHFV (127 aa).

This sequence belongs to the DnaA family. As to quaternary structure, oligomerizes as a right-handed, spiral filament on DNA at oriC.

The protein localises to the cytoplasm. Its function is as follows. Plays an essential role in the initiation and regulation of chromosomal replication. ATP-DnaA binds to the origin of replication (oriC) to initiate formation of the DNA replication initiation complex once per cell cycle. Binds the DnaA box (a 9 base pair repeat at the origin) and separates the double-stranded (ds)DNA. Forms a right-handed helical filament on oriC DNA; dsDNA binds to the exterior of the filament while single-stranded (ss)DNA is stabiized in the filament's interior. The ATP-DnaA-oriC complex binds and stabilizes one strand of the AT-rich DNA unwinding element (DUE), permitting loading of DNA polymerase. After initiation quickly degrades to an ADP-DnaA complex that is not apt for DNA replication. Binds acidic phospholipids. This is Chromosomal replication initiator protein DnaA 2 from Chlamydia trachomatis serovar D (strain ATCC VR-885 / DSM 19411 / UW-3/Cx).